Reading from the N-terminus, the 350-residue chain is Inhibitor of nuclear factor kappa-B kinase-interacting protein (350 aa).

Over residues 1-11 the composition is skewed to basic residues; sequence MSEVKSRKKSG. Positions 1–39 are disordered; sequence MSEVKSRKKSGPKGAPAAEPGKRSEGGKTPVARSSGGGG. Residues 46-62 traverse the membrane as a helical segment; sequence CLSLLSLGTCLGLAWFV. N-linked (GlcNAc...) asparagine glycosylation is present at asparagine 144. Residues 184–217 are a coiled coil; sequence GLVTDVISLTDSVQELENKIEKVEKNTVKNIGDL. Asparagine 328 carries an N-linked (GlcNAc...) asparagine glycan.

In terms of processing, N-glycosylated. Isoform 4 is glycosylated at Asn-154. In terms of tissue distribution, expressed in vein endothelial cells. Isoform 4 is expressed in lung, kidney, spleen, thymus and skeletal muscle.

It localises to the endoplasmic reticulum membrane. Functionally, target of p53/TP53 with pro-apoptotic function. The polypeptide is Inhibitor of nuclear factor kappa-B kinase-interacting protein (IKBIP) (Homo sapiens (Human)).